The sequence spans 265 residues: Hydroxyacylglutathione hydrolase (265 aa).

Residues His-53, His-55, Asp-57, His-58, His-109, Asp-126, and His-164 each coordinate Zn(2+).

The protein belongs to the metallo-beta-lactamase superfamily. Glyoxalase II family. In terms of assembly, monomer. It depends on Zn(2+) as a cofactor.

The catalysed reaction is an S-(2-hydroxyacyl)glutathione + H2O = a 2-hydroxy carboxylate + glutathione + H(+). Its pathway is secondary metabolite metabolism; methylglyoxal degradation; (R)-lactate from methylglyoxal: step 2/2. Functionally, thiolesterase that catalyzes the hydrolysis of S-D-lactoyl-glutathione to form glutathione and D-lactic acid. This chain is Hydroxyacylglutathione hydrolase, found in Dechloromonas aromatica (strain RCB).